Reading from the N-terminus, the 345-residue chain is GTPase Obg (345 aa).

Residues 1–159 enclose the Obg domain; the sequence is MHFLDQAKIF…MWVWLRLKLL (159 aa). The disordered stretch occupies residues 121-142; sequence GDGGRGNASYKTSTNRAPRQHG. Positions 160–327 constitute an OBG-type G domain; it reads ADCGLVGLPN…VLDKIIEILG (168 aa). GTP-binding positions include 166-173, 191-195, 212-215, 279-282, and 308-310; these read GLPNAGKS, FTTIR, DIPG, NKID, and SGA. Mg(2+) is bound by residues serine 173 and threonine 193.

The protein belongs to the TRAFAC class OBG-HflX-like GTPase superfamily. OBG GTPase family. As to quaternary structure, monomer. Requires Mg(2+) as cofactor.

It is found in the cytoplasm. In terms of biological role, an essential GTPase which binds GTP, GDP and possibly (p)ppGpp with moderate affinity, with high nucleotide exchange rates and a fairly low GTP hydrolysis rate. Plays a role in control of the cell cycle, stress response, ribosome biogenesis and in those bacteria that undergo differentiation, in morphogenesis control. This is GTPase Obg from Rhizorhabdus wittichii (strain DSM 6014 / CCUG 31198 / JCM 15750 / NBRC 105917 / EY 4224 / RW1) (Sphingomonas wittichii).